A 122-amino-acid polypeptide reads, in one-letter code: Holo-[acyl-carrier-protein] synthase (122 aa).

The Mg(2+) site is built by Asp-8 and Glu-58.

This sequence belongs to the P-Pant transferase superfamily. AcpS family. Mg(2+) serves as cofactor.

It is found in the cytoplasm. It carries out the reaction apo-[ACP] + CoA = holo-[ACP] + adenosine 3',5'-bisphosphate + H(+). In terms of biological role, transfers the 4'-phosphopantetheine moiety from coenzyme A to a Ser of acyl-carrier-protein. In Levilactobacillus brevis (strain ATCC 367 / BCRC 12310 / CIP 105137 / JCM 1170 / LMG 11437 / NCIMB 947 / NCTC 947) (Lactobacillus brevis), this protein is Holo-[acyl-carrier-protein] synthase.